We begin with the raw amino-acid sequence, 276 residues long: Triple specificity protein phosphatase PtpB (276 aa).

Catalysis depends on Cys-160, which acts as the Phosphocysteine intermediate. Positions 232–250 are UIM-like region; it reads LGVRAEYLAAARQTIDETY.

The protein belongs to the protein-tyrosine phosphatase family. As to quaternary structure, interacts (via UIM-like region) with host ubiquitin; activating the phosphatidylinositol phosphate phosphatase activity.

Its subcellular location is the secreted. It localises to the host cytoplasm. It is found in the host cell membrane. It catalyses the reaction O-phospho-L-tyrosyl-[protein] + H2O = L-tyrosyl-[protein] + phosphate. The enzyme catalyses O-phospho-L-seryl-[protein] + H2O = L-seryl-[protein] + phosphate. The catalysed reaction is O-phospho-L-threonyl-[protein] + H2O = L-threonyl-[protein] + phosphate. It carries out the reaction 1,2-dioctanoyl-sn-glycero-3-phospho-(1-D-myo-inositol-3-phosphate) + H2O = 1,2-dioctanoyl-sn-glycero-3-phospho-(1D-myo-inositol) + phosphate. It catalyses the reaction 1,2-dioctanoyl-sn-glycero-3-phospho-(1-D-myo-inositol-4-phosphate) + H2O = 1,2-dioctanoyl-sn-glycero-3-phospho-(1D-myo-inositol) + phosphate. The enzyme catalyses 1,2-dioctanoyl-sn-glycero-3-phospho-(1D-myo-inositol-5-phosphate) + H2O = 1,2-dioctanoyl-sn-glycero-3-phospho-(1D-myo-inositol) + phosphate. With respect to regulation, binding to host ubiquitin is required to activate the phosphatidylinositol phosphate phosphatase activity. Phosphatase activity is inhibited by sodium orthovanadate, a specific inhibitor of tyrosine phosphatases, but not by okadaic acid, an inhibitor of serine/threonine phosphatases. Inhibition of the enzyme reduces mycobacterial survival in infected macrophages. Inhibitors also enhance killing efficacy by first-line antibiotics. In terms of biological role, essential virulence factor that promotes mycobacterial survival within host macrophages. Acts as a phosphatase that possesses triple substrate specificity toward phosphotyrosine, phosphoserine/threonine and phosphoinositides. Supports mycobacteria survival during infection by modulating the normal host signaling pathways, attenuating the bactericidal immune responses and promoting the host cell survival. Inhibits host pyroptosis by disrupting the membrane localization of host gasdermin-D (GSDMD): acts by catalyzing dephosphorylation of phosphatidylinositol (4,5)-bisphosphate and phosphatidylinositol 4-phosphate, thereby inhibiting the membrane targeting of GSDMD and subsequent cytokine release and pyroptosis. Inhibits host inflammatory responses and apoptosis through impeding the NF-kappa-B and MAPK signal pathways and TP53/p53 expression in the macrophage. Blocks the IL6/IL-6 production by down-regulating ERK1/2, p38 and p65 activity. Prevents macrophage cell death by activating the Akt pathway and blocking caspase 3 activity. Reduces the expression of iNOS in activated macrophages and inhibits the generation of destroying reactive nitrogen intermediate NO. The chain is Triple specificity protein phosphatase PtpB from Mycobacterium tuberculosis (strain ATCC 25618 / H37Rv).